The primary structure comprises 379 residues: UDP-N-acetylglucosamine--N-acetylmuramyl-(pentapeptide) pyrophosphoryl-undecaprenol N-acetylglucosamine transferase (379 aa).

Residues 13 to 15 (TGG), asparagine 123, arginine 166, serine 194, and glutamine 295 each bind UDP-N-acetyl-alpha-D-glucosamine.

It belongs to the glycosyltransferase 28 family. MurG subfamily.

It is found in the cell inner membrane. The enzyme catalyses di-trans,octa-cis-undecaprenyl diphospho-N-acetyl-alpha-D-muramoyl-L-alanyl-D-glutamyl-meso-2,6-diaminopimeloyl-D-alanyl-D-alanine + UDP-N-acetyl-alpha-D-glucosamine = di-trans,octa-cis-undecaprenyl diphospho-[N-acetyl-alpha-D-glucosaminyl-(1-&gt;4)]-N-acetyl-alpha-D-muramoyl-L-alanyl-D-glutamyl-meso-2,6-diaminopimeloyl-D-alanyl-D-alanine + UDP + H(+). Its pathway is cell wall biogenesis; peptidoglycan biosynthesis. Functionally, cell wall formation. Catalyzes the transfer of a GlcNAc subunit on undecaprenyl-pyrophosphoryl-MurNAc-pentapeptide (lipid intermediate I) to form undecaprenyl-pyrophosphoryl-MurNAc-(pentapeptide)GlcNAc (lipid intermediate II). The polypeptide is UDP-N-acetylglucosamine--N-acetylmuramyl-(pentapeptide) pyrophosphoryl-undecaprenol N-acetylglucosamine transferase (Rhodospirillum centenum (strain ATCC 51521 / SW)).